A 570-amino-acid chain; its full sequence is Urease subunit alpha (570 aa).

In terms of domain architecture, Urease spans 131 to 570 (GGFDSHIHFI…LPLAQRYFMF (440 aa)). Ni(2+)-binding residues include histidine 136, histidine 138, and lysine 219. Lysine 219 bears the N6-carboxylysine mark. Histidine 221 lines the substrate pocket. Ni(2+) contacts are provided by histidine 248 and histidine 274. Histidine 322 acts as the Proton donor in catalysis. Aspartate 362 serves as a coordination point for Ni(2+).

The protein belongs to the metallo-dependent hydrolases superfamily. Urease alpha subunit family. In terms of assembly, heterotrimer of UreA (gamma), UreB (beta) and UreC (alpha) subunits. Three heterotrimers associate to form the active enzyme. The cofactor is Ni cation. Carboxylation allows a single lysine to coordinate two nickel ions.

The protein localises to the cytoplasm. It catalyses the reaction urea + 2 H2O + H(+) = hydrogencarbonate + 2 NH4(+). The protein operates within nitrogen metabolism; urea degradation; CO(2) and NH(3) from urea (urease route): step 1/1. The protein is Urease subunit alpha of Rhodopseudomonas palustris (strain ATCC BAA-98 / CGA009).